A 354-amino-acid polypeptide reads, in one-letter code: Guanine nucleotide-binding protein G(o) subunit alpha (354 aa).

Gly-2 is lipidated: N-myristoyl glycine. Cys-3 carries S-palmitoyl cysteine lipidation. The G-alpha domain maps to 32–354 (KDVKLLLLGA…ANNLRGCGLY (323 aa)). Positions 35 to 48 (KLLLLGAGESGKST) are G1 motif. GTP is bound by residues Glu-43, Lys-46, Ser-47, Thr-48, Ser-152, Leu-176, Arg-177, Thr-178, and Arg-179. Residue Ser-47 participates in Mg(2+) binding. The tract at residues 174-182 (DILRTRVKT) is G2 motif. Thr-182 lines the Mg(2+) pocket. Residues 197-206 (FRLFDVGGQR) are G3 motif. Position 205 is a 5-glutamyl histamine (Gln-205). Residues 266-273 (ILFLNKKD) are G4 motif. GTP contacts are provided by Asn-270, Asp-273, and Cys-325. The segment at 324–329 (TCATDT) is G5 motif. Asn-346 carries the post-translational modification Deamidated asparagine; in form Alpha-3. Cys-351 is lipidated: S-palmitoyl cysteine.

Belongs to the G-alpha family. G(i/o/t/z) subfamily. As to quaternary structure, g proteins are composed of 3 units; alpha, beta and gamma. The alpha chain contains the guanine nucleotide binding site. Forms a complex with GNB1 and GNG3. Interacts with RGS14. Interacts with RGS16. Interacts with RGS19. Interacts (when palmitoylated) with ADGRG3. Deamidation of Asn-346 converts alpha-1 to alpha-3. In terms of processing, histaminylated at Gln-205 residues by TGM2.

It is found in the cell membrane. The protein localises to the membrane. It carries out the reaction GTP + H2O = GDP + phosphate + H(+). With respect to regulation, the GTPase activity is promoted by GTPAse activators, such as RGS14, RGS16 and RGS19. Its function is as follows. Guanine nucleotide-binding proteins (G proteins) function as transducers downstream of G protein-coupled receptors (GPCRs) in numerous signaling cascades. The alpha chain contains the guanine nucleotide binding site and alternates between an active, GTP-bound state and an inactive, GDP-bound state. Signaling by an activated GPCR promotes GDP release and GTP binding. The alpha subunit has a low GTPase activity that converts bound GTP to GDP, thereby terminating the signal. Both GDP release and GTP hydrolysis are modulated by numerous regulatory proteins. Signaling is mediated via effector proteins, such as adenylate cyclase. Inhibits adenylate cyclase activity, leading to decreased intracellular cAMP levels. This Cricetulus longicaudatus (Long-tailed dwarf hamster) protein is Guanine nucleotide-binding protein G(o) subunit alpha (GNAO1).